We begin with the raw amino-acid sequence, 159 residues long: uncharacterized protein (159 aa).

The tract at residues 9–36 is disordered; sequence VTSGNKEKKKKRSSAGLTGHAPPAADSS.

This is an uncharacterized protein from Caenorhabditis elegans.